The following is a 261-amino-acid chain: MLKKRLIPKLQFSIKPSYRGPKPVLVITRQFDSKRAIGDPVSQAKIYEAQLADELVLVDLEGTSDSWPILLDTLSNMSESLATPLSVGGGITSFEQVQQLLDRGADKVVLNSGAVNNPQLIDLVANSYGSQCVVISIDIRKESDLSRHVYIDGGSTATDWSLFSWANDCASRGAGELLITSIDNDGTGTGLDLDSIRQLRYEVNLPLIASGGCGLAQHFVAGYEVGASAVAAGTFFSQRDQNPMQCRSHIRNAGLPIRLEQ.

The active site involves aspartate 138.

Belongs to the HisA/HisF family. Heterodimer of HisH and HisF.

The protein localises to the cytoplasm. It catalyses the reaction 5-[(5-phospho-1-deoxy-D-ribulos-1-ylimino)methylamino]-1-(5-phospho-beta-D-ribosyl)imidazole-4-carboxamide + L-glutamine = D-erythro-1-(imidazol-4-yl)glycerol 3-phosphate + 5-amino-1-(5-phospho-beta-D-ribosyl)imidazole-4-carboxamide + L-glutamate + H(+). The protein operates within amino-acid biosynthesis; L-histidine biosynthesis; L-histidine from 5-phospho-alpha-D-ribose 1-diphosphate: step 5/9. Its function is as follows. IGPS catalyzes the conversion of PRFAR and glutamine to IGP, AICAR and glutamate. The HisF subunit catalyzes the cyclization activity that produces IGP and AICAR from PRFAR using the ammonia provided by the HisH subunit. The sequence is that of Putative imidazole glycerol phosphate synthase subunit hisF2 (hisF2) from Prochlorococcus marinus (strain MIT 9313).